Consider the following 975-residue polypeptide: Glycine dehydrogenase (decarboxylating) (975 aa).

Position 723 is an N6-(pyridoxal phosphate)lysine (Lys723).

This sequence belongs to the GcvP family. As to quaternary structure, the glycine cleavage system is composed of four proteins: P, T, L and H. The cofactor is pyridoxal 5'-phosphate.

The catalysed reaction is N(6)-[(R)-lipoyl]-L-lysyl-[glycine-cleavage complex H protein] + glycine + H(+) = N(6)-[(R)-S(8)-aminomethyldihydrolipoyl]-L-lysyl-[glycine-cleavage complex H protein] + CO2. In terms of biological role, the glycine cleavage system catalyzes the degradation of glycine. The P protein binds the alpha-amino group of glycine through its pyridoxal phosphate cofactor; CO(2) is released and the remaining methylamine moiety is then transferred to the lipoamide cofactor of the H protein. In Burkholderia mallei (strain NCTC 10247), this protein is Glycine dehydrogenase (decarboxylating).